A 67-amino-acid polypeptide reads, in one-letter code: Bowman-Birk type major trypsin inhibitor (67 aa).

Intrachain disulfides connect Cys8–Cys63, Cys9–Cys24, Cys14–Cys22, Cys31–Cys38, and Cys35–Cys51.

This sequence belongs to the Bowman-Birk serine protease inhibitor family.

The protein is Bowman-Birk type major trypsin inhibitor of Setaria italica (Foxtail millet).